A 201-amino-acid polypeptide reads, in one-letter code: Two-component response regulator ORR10 (201 aa).

One can recognise a Response regulatory domain in the interval 10–142 (HVLAVDDSLP…DMSKLKPHIL (133 aa)). D75 is modified (4-aspartylphosphate). The segment at 149–201 (HYQQEQHLQSNSESNNSSNPTSENSSSSTSTNSHKRKAVDEEILPHTIRPRHS) is disordered. Over residues 158-180 (SNSESNNSSNPTSENSSSSTSTN) the composition is skewed to low complexity.

Belongs to the ARR family. Type-A subfamily. In terms of processing, two-component system major event consists of a His-to-Asp phosphorelay between a sensor histidine kinase (HK) and a response regulator (RR). In plants, the His-to-Asp phosphorelay involves an additional intermediate named Histidine-containing phosphotransfer protein (HPt). This multistep phosphorelay consists of a His-Asp-His-Asp sequential transfer of a phosphate group between first a His and an Asp of the HK protein, followed by the transfer to a conserved His of the HPt protein and finally the transfer to an Asp in the receiver domain of the RR protein. Expressed in mature leaves, and at low levels in roots, shoots and flowers.

Functionally, functions as a response regulator involved in His-to-Asp phosphorelay signal transduction system. Phosphorylation of the Asp residue in the receiver domain activates the ability of the protein to promote the transcription of target genes. Type-A response regulators seem to act as negative regulators of the cytokinin signaling. The chain is Two-component response regulator ORR10 from Oryza sativa subsp. indica (Rice).